The chain runs to 338 residues: Lipoate-protein ligase A (338 aa).

The region spanning 29 to 216 is the BPL/LPL catalytic domain; the sequence is PADQRVLFLW…AYCEHYQQQV (188 aa). ATP-binding positions include R71, 76–79, and K134; that span reads GAVF. K134 is a binding site for (R)-lipoate.

This sequence belongs to the LplA family. As to quaternary structure, monomer.

The protein localises to the cytoplasm. It catalyses the reaction L-lysyl-[lipoyl-carrier protein] + (R)-lipoate + ATP = N(6)-[(R)-lipoyl]-L-lysyl-[lipoyl-carrier protein] + AMP + diphosphate + H(+). The protein operates within protein modification; protein lipoylation via exogenous pathway; protein N(6)-(lipoyl)lysine from lipoate: step 1/2. It functions in the pathway protein modification; protein lipoylation via exogenous pathway; protein N(6)-(lipoyl)lysine from lipoate: step 2/2. Functionally, catalyzes both the ATP-dependent activation of exogenously supplied lipoate to lipoyl-AMP and the transfer of the activated lipoyl onto the lipoyl domains of lipoate-dependent enzymes. This is Lipoate-protein ligase A from Vibrio cholerae serotype O1 (strain ATCC 39541 / Classical Ogawa 395 / O395).